We begin with the raw amino-acid sequence, 141 residues long: Protein X (141 aa).

Over residues 24 to 48 the composition is skewed to low complexity; that stretch reads QSSGPPFPRPSAGSAASPASSLSAS. A disordered region spans residues 24-51; it reads QSSGPPFPRPSAGSAASPASSLSASDES. Residues 68–113 form a mitochondrial targeting sequence region; the sequence is PCCLVVTCAELRTMDSTVNFVSWHANRQLGMPSKDLWTPYIRDQLL.

The protein belongs to the orthohepadnavirus protein X family. As to quaternary structure, may form homodimer. May interact with host CEBPA, CFLAR, CREB1, DDB1, E4F1, HBXIP, HSPD1/HSP60, NFKBIA, POLR2E and SMAD4. Interacts with host SMC5-SMC6 complex and induces its degradation. Interacts with host TRPC4AP; leading to prevent ubiquitination of TRPC4AP. Interacts with host PLSCR1; this interaction promotes ubiquitination and degradation of HBx and impairs HBx-mediated cell proliferation. Post-translationally, a fraction may be phosphorylated in insect cells and HepG2 cells, a human hepatoblastoma cell line. Phosphorylated in vitro by host protein kinase C or mitogen-activated protein kinase. N-acetylated in insect cells.

It is found in the host cytoplasm. Its subcellular location is the host nucleus. The protein localises to the host mitochondrion. In terms of biological role, multifunctional protein that plays a role in silencing host antiviral defenses and promoting viral transcription. Does not seem to be essential for HBV infection. May be directly involved in development of cirrhosis and liver cancer (hepatocellular carcinoma). Most of cytosolic activities involve modulation of cytosolic calcium. The effect on apoptosis is controversial depending on the cell types in which the studies have been conducted. May induce apoptosis by localizing in mitochondria and causing loss of mitochondrial membrane potential. May also modulate apoptosis by binding host CFLAR, a key regulator of the death-inducing signaling complex (DISC). Promotes viral transcription by using the host E3 ubiquitin ligase DDB1 to target the SMC5-SMC6 complex to proteasomal degradation. This host complex would otherwise bind to viral episomal DNA, and prevents its transcription. Moderately stimulates transcription of many different viral and cellular transcription elements. Promoters and enhancers stimulated by HBx contain DNA binding sites for NF-kappa-B, AP-1, AP-2, c-EBP, ATF/CREB, or the calcium-activated factor NF-AT. This is Protein X from Woodchuck hepatitis B virus (isolate 1) (WHV).